A 144-amino-acid chain; its full sequence is Large ribosomal subunit protein uL13 (144 aa).

Belongs to the universal ribosomal protein uL13 family. In terms of assembly, part of the 50S ribosomal subunit.

In terms of biological role, this protein is one of the early assembly proteins of the 50S ribosomal subunit, although it is not seen to bind rRNA by itself. It is important during the early stages of 50S assembly. In Clostridium novyi (strain NT), this protein is Large ribosomal subunit protein uL13.